Reading from the N-terminus, the 124-residue chain is Small ribosomal subunit protein uS12 (124 aa).

3-methylthioaspartic acid is present on D89.

It belongs to the universal ribosomal protein uS12 family. In terms of assembly, part of the 30S ribosomal subunit. Contacts proteins S8 and S17. May interact with IF1 in the 30S initiation complex.

Functionally, with S4 and S5 plays an important role in translational accuracy. In terms of biological role, interacts with and stabilizes bases of the 16S rRNA that are involved in tRNA selection in the A site and with the mRNA backbone. Located at the interface of the 30S and 50S subunits, it traverses the body of the 30S subunit contacting proteins on the other side and probably holding the rRNA structure together. The combined cluster of proteins S8, S12 and S17 appears to hold together the shoulder and platform of the 30S subunit. This is Small ribosomal subunit protein uS12 from Acinetobacter baumannii (strain AB307-0294).